Reading from the N-terminus, the 435-residue chain is Monodehydroascorbate reductase 4, cytosolic (435 aa).

Residues G14 to A17, E41, R48, K53, I96, and R147 to D148 contribute to the FAD site. Residues G172–E178, E196, R202, and G261 each bind NAD(+). Y174–E178 is a binding site for NADP(+). R202 and G261 together coordinate NADP(+). Residue D298 coordinates FAD. Position 314 to 315 (E314 to H315) interacts with NAD(+). An NADP(+)-binding site is contributed by E314–H315. V316 is an FAD binding site. R320 serves as a coordination point for L-ascorbate. Y349 is an FAD binding site. Position 349 (Y349) interacts with NAD(+). Y349 lines the NADP(+) pocket. Position 351 (R351) interacts with L-ascorbate.

This sequence belongs to the FAD-dependent oxidoreductase family. The cofactor is FAD. In terms of tissue distribution, expressed in anthers.

It localises to the cytoplasm. It carries out the reaction 2 monodehydro-L-ascorbate radical + NADH + H(+) = 2 L-ascorbate + NAD(+). In terms of biological role, catalyzes the conversion of monodehydroascorbate to ascorbate, oxidizing NADH in the process. Ascorbate is a major antioxidant against reactive oxygen species (ROS) and nitric oxide (NO). The chain is Monodehydroascorbate reductase 4, cytosolic from Oryza sativa subsp. japonica (Rice).